An 83-amino-acid polypeptide reads, in one-letter code: Small ribosomal subunit protein eS27 (83 aa).

The segment at 37–59 (CSGCFKISTVFSHATTVVVCVGC) adopts a C4-type zinc-finger fold.

It belongs to the eukaryotic ribosomal protein eS27 family. It depends on Zn(2+) as a cofactor.

The chain is Small ribosomal subunit protein eS27 (rps-27) from Caenorhabditis elegans.